The primary structure comprises 426 residues: Fc receptor-like B (426 aa).

The first 17 residues, 1 to 17, serve as a signal peptide directing secretion; sequence MWPLTALLLLVPSSGQA. Ig-like C2-type domains follow at residues 23–101 and 103–189; these read PILS…LSVS and DWLI…VAVT. 2 disulfide bridges follow: cysteine 44-cysteine 85 and cysteine 124-cysteine 168. N-linked (GlcNAc...) asparagine glycosylation is present at asparagine 152. Residues 400-426 form a disordered region; the sequence is ELRGTPETPTSHFAVSPGTPETTPVES. Polar residues predominate over residues 406-426; sequence ETPTSHFAVSPGTPETTPVES.

As to expression, expressed at low levels. Expressed in B-lymphocytes. Detected in tonsil, lung, kidney, spleen and placenta. Expressed by a small subset of germinal center B-cells in tonsils and by melanocytes (at protein level).

The protein localises to the cytoplasm. The protein resides in the endoplasmic reticulum. The polypeptide is Fc receptor-like B (FCRLB) (Homo sapiens (Human)).